The sequence spans 295 residues: Small ribosomal subunit protein uS2 (295 aa).

Residues 273–295 (WAASSAPAAETLADPAADPSVKW) form a disordered region. Residues 274–295 (AASSAPAAETLADPAADPSVKW) show a composition bias toward low complexity.

The protein belongs to the universal ribosomal protein uS2 family. Component of the small ribosomal subunit. Mature ribosomes consist of a small (40S) and a large (60S) subunit. The 40S subunit contains about 33 different proteins and 1 molecule of RNA (18S). The 60S subunit contains about 49 different proteins and 3 molecules of RNA (25S, 5.8S and 5S). Interacts with RPS21.

It is found in the cytoplasm. Required for the assembly and/or stability of the 40S ribosomal subunit. Required for the processing of the 20S rRNA-precursor to mature 18S rRNA in a late step of the maturation of 40S ribosomal subunits. The polypeptide is Small ribosomal subunit protein uS2 (Paracoccidioides lutzii (strain ATCC MYA-826 / Pb01) (Paracoccidioides brasiliensis)).